The chain runs to 349 residues: Probable formaldehyde dehydrogenase AdhA (349 aa).

The Zn(2+) site is built by C44, H66, C97, C100, C103, C111, and C161.

The protein belongs to the zinc-containing alcohol dehydrogenase family. The cofactor is Zn(2+).

In terms of biological role, functions in the protection against aldehyde-stress. The sequence is that of Probable formaldehyde dehydrogenase AdhA (adhA) from Bacillus subtilis (strain 168).